Reading from the N-terminus, the 146-residue chain is Histone H2A.1 (146 aa).

The interval 118 to 146 is disordered; that stretch reads SPAAAEKEAKSPKKKTSTKSPKKKVAAKE. Short sequence motifs (SPKK motif) lie at residues 128–131 and 137–140; these read SPKK. A compositionally biased stretch (basic residues) spans 129–146; it reads PKKKTSTKSPKKKVAAKE.

The protein belongs to the histone H2A family. The nucleosome is a histone octamer containing two molecules each of H2A, H2B, H3 and H4 assembled in one H3-H4 heterotetramer and two H2A-H2B heterodimers. The octamer wraps approximately 147 bp of DNA. Phosphorylated within its C-terminal part, probably at the SPKK motifs. In terms of tissue distribution, expressed preferentially in meristematic tissues of young seedlings, in stigma and ovary but not in pollen.

Its subcellular location is the nucleus. It is found in the chromosome. Functionally, core component of nucleosome. Nucleosomes wrap and compact DNA into chromatin, limiting DNA accessibility to the cellular machineries which require DNA as a template. Histones thereby play a central role in transcription regulation, DNA repair, DNA replication and chromosomal stability. DNA accessibility is regulated via a complex set of post-translational modifications of histones, also called histone code, and nucleosome remodeling. This is Histone H2A.1 (H2A-9) from Triticum aestivum (Wheat).